An 82-amino-acid polypeptide reads, in one-letter code: Sec-independent protein translocase protein TatA (82 aa).

A helical membrane pass occupies residues 1 to 21; it reads MGSFSIWHWLIVLLIVVMVFG. The segment at 46-82 is disordered; sequence GASTDDSATTSAPAGQVTNNSAAADKTTIDVEAKHKS. A compositionally biased stretch (polar residues) spans 49–67; that stretch reads TDDSATTSAPAGQVTNNSA. The span at 72-82 shows a compositional bias: basic and acidic residues; that stretch reads TTIDVEAKHKS.

This sequence belongs to the TatA/E family. As to quaternary structure, the Tat system comprises two distinct complexes: a TatABC complex, containing multiple copies of TatA, TatB and TatC subunits, and a separate TatA complex, containing only TatA subunits. Substrates initially bind to the TatABC complex, which probably triggers association of the separate TatA complex to form the active translocon.

It is found in the cell inner membrane. In terms of biological role, part of the twin-arginine translocation (Tat) system that transports large folded proteins containing a characteristic twin-arginine motif in their signal peptide across membranes. TatA could form the protein-conducting channel of the Tat system. This Acidovorax ebreus (strain TPSY) (Diaphorobacter sp. (strain TPSY)) protein is Sec-independent protein translocase protein TatA.